The sequence spans 454 residues: Bifunctional protein GlmU (454 aa).

Residues 1-228 (MNKCAIILAA…FEETLGVNSR (228 aa)) form a pyrophosphorylase region. UDP-N-acetyl-alpha-D-glucosamine contacts are provided by residues 8 to 11 (LAAG), K22, Q73, and 78 to 79 (GT). Position 103 (D103) interacts with Mg(2+). Residues G140, E154, N169, and N226 each coordinate UDP-N-acetyl-alpha-D-glucosamine. N226 contributes to the Mg(2+) binding site. A linker region spans residues 229–249 (AELAKVESIMRNRINRTHLDN). The N-acetyltransferase stretch occupies residues 250–454 (GVTIIDPLNT…EGWVERKKLK (205 aa)). Positions 331 and 349 each coordinate UDP-N-acetyl-alpha-D-glucosamine. H361 serves as the catalytic Proton acceptor. Residues Y364 and N375 each coordinate UDP-N-acetyl-alpha-D-glucosamine. Residues 384–385 (NY), A421, and R438 each bind acetyl-CoA.

The protein in the N-terminal section; belongs to the N-acetylglucosamine-1-phosphate uridyltransferase family. This sequence in the C-terminal section; belongs to the transferase hexapeptide repeat family. In terms of assembly, homotrimer. Requires Mg(2+) as cofactor.

Its subcellular location is the cytoplasm. The enzyme catalyses alpha-D-glucosamine 1-phosphate + acetyl-CoA = N-acetyl-alpha-D-glucosamine 1-phosphate + CoA + H(+). It carries out the reaction N-acetyl-alpha-D-glucosamine 1-phosphate + UTP + H(+) = UDP-N-acetyl-alpha-D-glucosamine + diphosphate. Its pathway is nucleotide-sugar biosynthesis; UDP-N-acetyl-alpha-D-glucosamine biosynthesis; N-acetyl-alpha-D-glucosamine 1-phosphate from alpha-D-glucosamine 6-phosphate (route II): step 2/2. The protein operates within nucleotide-sugar biosynthesis; UDP-N-acetyl-alpha-D-glucosamine biosynthesis; UDP-N-acetyl-alpha-D-glucosamine from N-acetyl-alpha-D-glucosamine 1-phosphate: step 1/1. It functions in the pathway bacterial outer membrane biogenesis; LPS lipid A biosynthesis. Catalyzes the last two sequential reactions in the de novo biosynthetic pathway for UDP-N-acetylglucosamine (UDP-GlcNAc). The C-terminal domain catalyzes the transfer of acetyl group from acetyl coenzyme A to glucosamine-1-phosphate (GlcN-1-P) to produce N-acetylglucosamine-1-phosphate (GlcNAc-1-P), which is converted into UDP-GlcNAc by the transfer of uridine 5-monophosphate (from uridine 5-triphosphate), a reaction catalyzed by the N-terminal domain. The protein is Bifunctional protein GlmU of Clostridium perfringens (strain SM101 / Type A).